A 671-amino-acid polypeptide reads, in one-letter code: Vinexin (671 aa).

Glutamine 2 carries the N-acetylalanine modification. Residue arginine 6 is modified to Phosphoserine. Disordered stretches follow at residues 46-111, 166-215, 249-268, 295-324, and 337-383; these read LNFQ…TKDS, TFEE…RPGA, LETG…EKPS, TRLP…AWSS, and SLSP…KKRK. Residues 88–108 show a composition bias toward polar residues; the sequence is PSASTKIPASQHTQNWSATWT. The SoHo domain maps to 115 to 187; sequence DKRWVKYEGI…GAQQRPAHRP (73 aa). Serine 348 is modified (phosphoserine). Residues 359-368 show a composition bias toward polar residues; sequence PSSTRDPSAS. SH3 domains follow at residues 380–439 and 454–515; these read KKRK…VLPA and LEYG…VSRE. The tract at residues 380 to 515 is binds to vinculin; sequence KKRKAARLKF…PASYVQVSRE (136 aa). Serine 395 is subject to Phosphoserine. Residues 519–611 are disordered; sequence RLCDDGPQLP…LGTSSPNTSQ (93 aa). Position 530 is a phosphoserine; by MAPK1 (serine 530). Positions 535-553 are enriched in low complexity; the sequence is AAARSARHPSSPSALRSPA. Phosphoserine occurs at positions 544, 545, 547, 551, and 563. A compositionally biased stretch (polar residues) spans 560–584; the sequence is GQTSPRRTGFSFPTQEPRPQTQNLG. The SH3 3 domain occupies 612 to 671; it reads IHWTPYRAMYQYRPQNEDELELREGDRVDVMQQCDDGWFVGVSRRTQKFGTFPGNYVAPV. The binds to SOS stretch occupies residues 612 to 671; the sequence is IHWTPYRAMYQYRPQNEDELELREGDRVDVMQQCDDGWFVGVSRRTQKFGTFPGNYVAPV.

In terms of assembly, interacts with DLG5 through its third SH3 domain. Interacts with vinculin by the first two SH3 domains and the proline rich region of vinculin. Binds to SOS (guanine nucleotide exchange factor of RAS and RAC), through its third SH3 domain. The formation of this complex is down-regulated by phosphorylation of SOS. Interacts with INPPL1/SHIP2, SAFB2, SOCS7 and SRCIN1. Interacts with FASLG. Interacts with MAPK1/ERK2. Phosphorylated at Ser-530 by MAPK1/ERK2 during cell spreading. Both isoforms are expressed in different tissues like heart, placenta, brain, skeletal muscle and pancreas. Isoform beta is especially found in liver.

It is found in the cell junction. The protein resides in the cytoplasm. It localises to the cytoskeleton. Its subcellular location is the nucleus. Its function is as follows. Vinexin alpha isoform promotes up-regulation of actin stress fiber formation. Vinexin beta isoform plays a role in cell spreading and enhances the activation of JNK/SAPK in response to EGF stimulation by using its third SH3 domain. The polypeptide is Vinexin (SORBS3) (Homo sapiens (Human)).